Consider the following 261-residue polypeptide: Hydroxylase cctR (261 aa).

Residues 38 to 58 (VFVSLLILSNTISFGLLGWIG) form a helical membrane-spanning segment. Asparagine 95 carries an N-linked (GlcNAc...) asparagine glycan. Short sequence motifs (HXXHC) lie at residues 146 to 150 (HEIHC) and 176 to 180 (HIAHC).

This sequence belongs to the ustYa family.

It localises to the membrane. It functions in the pathway mycotoxin biosynthesis. Hydroxylase; part of the gene cluster that mediates the biosynthesis of the mycotoxin cyclochlorotine, a hepatotoxic and carcinogenic cyclic chlorinated pentapeptide. Within the pathway, cctR performs the last step by hydroxylating cyclochlorotine to yield hydroxycyclochlorotine. The NRPS cctN initially catalyzes the condensation of L-serine (Ser), Pro, L-2-aminobutyrate (2Abu), Ser, and beta-Phe in this order to produce isocyclotine. After the dichlorination of Pro2 catalyzed by cctP2 to produce isocyclochlorotine, the cctO-mediated transacylation of isocyclochlorotine can furnish cyclochlorotine. The subsequent hydroxylation of cyclochlorotine by cctR yields hydroxycyclochlorotine as the final product. CctP1 probably acts as a phenylalanine aminomutase and provides the uncommon building block beta-Phe. Furthermore, 2Abu can be synthesized from threonine by one of the threonine dehydratases and transaminases localized outside of the cluster. The functions of the remaining proteins encoded by the cluster, cctM and cctT, have not been identified yet. In Talaromyces islandicus (Penicillium islandicum), this protein is Hydroxylase cctR.